Consider the following 172-residue polypeptide: Adenylate kinase isoenzyme 6 (172 aa).

The ATP site is built by Gly-13, Gly-15, Lys-16, Thr-17, and Thr-18. Residues 33 to 56 (NVGDLAREGHLYDGYDEEYGCPIL) form an NMPbind region. The interval 108 to 118 (TRGYHEKKLQD) is LID. Arg-109 is an ATP binding site.

The protein belongs to the adenylate kinase family. AK6 subfamily. As to quaternary structure, monomer and homodimer. Interacts with small ribosomal subunit protein uS11. Not a structural component of 43S pre-ribosomes, but transiently interacts with them by binding to uS11. Interacts with COIL (via C-terminus).

Its subcellular location is the cytoplasm. The protein localises to the nucleus. The protein resides in the nucleoplasm. It localises to the cajal body. It carries out the reaction AMP + ATP = 2 ADP. The catalysed reaction is ATP + H2O = ADP + phosphate + H(+). Broad-specificity nucleoside monophosphate (NMP) kinase that catalyzes the reversible transfer of the terminal phosphate group between nucleoside triphosphates and monophosphates. Also has ATPase activity. Involved in the late cytoplasmic maturation steps of the 40S ribosomal particles, specifically 18S rRNA maturation. While NMP activity is not required for ribosome maturation, ATPase activity is. Associates transiently with small ribosomal subunit protein uS11. ATP hydrolysis breaks the interaction with uS11. May temporarily remove uS11 from the ribosome to enable a conformational change of the ribosomal RNA that is needed for the final maturation step of the small ribosomal subunit. Its NMP activity may have a role in nuclear energy homeostasis. May be involved in regulation of Cajal body (CB) formation. The sequence is that of Adenylate kinase isoenzyme 6 from Rattus norvegicus (Rat).